Consider the following 452-residue polypeptide: Cobyrinate a,c-diamide synthase (452 aa).

The 194-residue stretch at 248–441 (RVAYALDAAF…LHIHFYQNLA (194 aa)) folds into the GATase cobBQ-type domain. The active-site Nucleophile is cysteine 330.

It belongs to the CobB/CbiA family. It depends on Mg(2+) as a cofactor.

It carries out the reaction cob(II)yrinate + 2 L-glutamine + 2 ATP + 2 H2O = cob(II)yrinate a,c diamide + 2 L-glutamate + 2 ADP + 2 phosphate + 2 H(+). The protein operates within cofactor biosynthesis; adenosylcobalamin biosynthesis; cob(II)yrinate a,c-diamide from sirohydrochlorin (anaerobic route): step 10/10. Functionally, catalyzes the ATP-dependent amidation of the two carboxylate groups at positions a and c of cobyrinate, using either L-glutamine or ammonia as the nitrogen source. The protein is Cobyrinate a,c-diamide synthase of Listeria monocytogenes serovar 1/2a (strain ATCC BAA-679 / EGD-e).